The sequence spans 121 residues: MTDRNRDKKSTSPSNSDTEMKSEQLPPCVNPGNPVFSCMLDPKTLQTATSLSKPQMIMYKTNSSHYGEFLPIPQFFPCNYTPKEQVFSSHIRATGFYQNNTLNTAPDRTRTLDFPNIQHTL.

Positions 1-10 are enriched in basic and acidic residues; it reads MTDRNRDKKS. A disordered region spans residues 1–29; the sequence is MTDRNRDKKSTSPSNSDTEMKSEQLPPCV.

Belongs to the PIERCE2 family. Microtubule inner protein component of sperm flagellar doublet microtubules. Interacts with CFAP53, ODAD1 and ODAD3; the interactions link the outer dynein arms docking complex (ODA-DC) to the internal microtubule inner proteins (MIP) in cilium axoneme. In terms of tissue distribution, expressed in airway epithelial cells.

Its subcellular location is the cytoplasm. The protein localises to the cytoskeleton. It localises to the cilium axoneme. It is found in the flagellum axoneme. Microtubule inner protein involved in the attachment of outer dynein arms (ODAs) to dynein-decorated doublet microtubules (DMTs) in cilia axoneme, which is required for motile cilia beating. The protein is Piercer of microtubule wall 2 protein of Homo sapiens (Human).